Consider the following 146-residue polypeptide: Hemoglobin subunit beta (146 aa).

One can recognise a Globin domain in the interval 2 to 146; sequence HWTAEEKQLI…VAHALARKYH (145 aa). 2 residues coordinate heme b: histidine 63 and histidine 92.

The protein belongs to the globin family. In terms of assembly, heterotetramer of two alpha chains and two beta chains. As to expression, red blood cells.

Functionally, involved in oxygen transport from the lung to the various peripheral tissues. This Ciconia ciconia (White stork) protein is Hemoglobin subunit beta (HBB).